A 183-amino-acid polypeptide reads, in one-letter code: DELTA-miturgitoxin-Cp1c (183 aa).

The signal sequence occupies residues 1 to 20; that stretch reads MKFSLFFSVFFLAVLHACLS. The propeptide occupies 21 to 47; that stretch reads ESEIDLEDEEHFMSSDSFLSEIQDESR. Residues 44–47 carry the Processing quadruplet motif motif; that stretch reads DESR. Intrachain disulfides connect Cys-51–Cys-66, Cys-58–Cys-75, Cys-65–Cys-88, Cys-77–Cys-86, Cys-115–Cys-130, Cys-122–Cys-139, Cys-129–Cys-157, and Cys-141–Cys-155. Residues 164-177 are predicted alpha-helix; sequence QAIEGALRIAKKLI. Trp-181 bears the Tryptophan amide mark.

It belongs to the neurotoxin 19 (CSTX) family. Double-CSTX subfamily. In terms of processing, cleavage of the propeptide depends on the processing quadruplet motif (XXXR, with at least one of X being E). In terms of tissue distribution, expressed by the venom gland.

The protein resides in the secreted. It localises to the target cell membrane. Spider venom toxin that exhibits cytolytic activity by forming an alpha-helix across the membrane. Lethal to insect larvae. Causes instant paralysis and death in the larvae of the flesh fly (S.carnaria) at doses of 20 ug/g, at doses of less than 10 ug/g causes reversible paralysis. Has cytolytic activity against insect Sf9 cells. Causes stable and irreversible depolarization of fly muscle fibers, leading to contracture at higher toxin concentrations. Destabilizes membranes. In Cheiracanthium punctorium (Yellow sac spider), this protein is DELTA-miturgitoxin-Cp1c.